A 468-amino-acid polypeptide reads, in one-letter code: Argininosuccinate lyase (468 aa).

This sequence belongs to the lyase 1 family. Argininosuccinate lyase subfamily.

The protein resides in the cytoplasm. The catalysed reaction is 2-(N(omega)-L-arginino)succinate = fumarate + L-arginine. Its pathway is amino-acid biosynthesis; L-arginine biosynthesis; L-arginine from L-ornithine and carbamoyl phosphate: step 3/3. The chain is Argininosuccinate lyase from Gloeobacter violaceus (strain ATCC 29082 / PCC 7421).